A 606-amino-acid polypeptide reads, in one-letter code: MVERKKRKQIQRNNSESNRNQKRRISHDKINRDELVVYRILCPIDVVGGVIGKSGKVINAIRHNTKAKIKVFDQLHGCSQRVITIYCSVKEKQEEIGFTKSENEPLCCAQDALLKVYDAIVASDEENNTKTNVDRDDNKECRLLVPFSQSSSLIGKAGENIKRIRRRTRASVKVVSKDVSDPSHVCAMEYDNVVVISGEPESVKQALFAVSAIMYKINPRENIPLDSTSQDVPAASVIVPSDLSNSVYPQTGFYSNQDHILQQGAGVPSYFNALSVSDFQGYAETAANPVPVFASSLPVTHGFGGSSRSEELVFKVLCPLCNIMRVIGKGGSTIKRIREASGSCIEVNDSRTKCGDDECVIIVTATESPDDMKSMAVEAVLLLQEYINDEDAENVKMQLLVSSKVIGCVIGKSGSVINEIRKRTNANICISKGKKDDLVEVSGEVSSVRDALIQIVLRLREDVLGDKDSVATRKPPARTDNCSFLSGSSNAGYTLPSFMSSMASTSGFHGYGSFPAGDNVLGSTGPYSYGRLPSSSALEILIPAHAMSKVMGKGGGNLENIRRISGAMIEISASKTSHGDHIALLSGTLEQMRCAENLVQAFVMST.

Over residues M1–I10 the composition is skewed to basic residues. The tract at residues M1–S26 is disordered. 5 KH domains span residues L35–T99, N138–V210, E311–V380, N394–I455, and S535–V599.

It is found in the nucleus. This Arabidopsis thaliana (Mouse-ear cress) protein is KH domain-containing protein At4g18375.